A 540-amino-acid chain; its full sequence is Membrane protein insertase YidC (540 aa).

The next 5 membrane-spanning stretches (helical) occupy residues 7–27, 345–365, 415–435, 453–473, and 494–514; these read LLVL…QMDY, IVSN…GILY, LGGC…YWTF, LSAQ…MFLL, and PLIF…YWLV.

Belongs to the OXA1/ALB3/YidC family. Type 1 subfamily. In terms of assembly, interacts with the Sec translocase complex via SecD. Specifically interacts with transmembrane segments of nascent integral membrane proteins during membrane integration.

The protein resides in the cell inner membrane. Functionally, required for the insertion and/or proper folding and/or complex formation of integral membrane proteins into the membrane. Involved in integration of membrane proteins that insert both dependently and independently of the Sec translocase complex, as well as at least some lipoproteins. Aids folding of multispanning membrane proteins. The polypeptide is Membrane protein insertase YidC (Mannheimia succiniciproducens (strain KCTC 0769BP / MBEL55E)).